The sequence spans 250 residues: Uracil-DNA glycosylase (250 aa).

Aspartate 78 serves as the catalytic Proton acceptor. The segment at arginine 228 to leucine 250 is disordered.

The protein belongs to the uracil-DNA glycosylase (UDG) superfamily. UNG family.

The protein resides in the cytoplasm. The catalysed reaction is Hydrolyzes single-stranded DNA or mismatched double-stranded DNA and polynucleotides, releasing free uracil.. Excises uracil residues from the DNA which can arise as a result of misincorporation of dUMP residues by DNA polymerase or due to deamination of cytosine. The polypeptide is Uracil-DNA glycosylase (Bordetella bronchiseptica (strain ATCC BAA-588 / NCTC 13252 / RB50) (Alcaligenes bronchisepticus)).